We begin with the raw amino-acid sequence, 211 residues long: WW domain-containing protein WWM1 (211 aa).

A WW domain is found at 9–43 (PQVPSGWKAVFDDEYQTWYYVDLSTNSSQWEPPRG). The segment at 32-116 (STNSSQWEPP…QRYYPQQAPM (85 aa)) is disordered. Glycyl lysine isopeptide (Lys-Gly) (interchain with G-Cter in ubiquitin) cross-links involve residues Lys50 and Lys60. A Phosphoserine modification is found at Ser75. Phosphothreonine is present on Thr78. A compositionally biased stretch (low complexity) spans 80–116 (QVQAGAQAQQPRYYQPQQPQYPQYPQQQRYYPQQAPM).

Interacts with metacaspase MCA1.

It is found in the cytoplasm. The protein resides in the nucleus. Its subcellular location is the mitochondrion. Its function is as follows. Involved in apoptosis. May play a role in nuclear function controlling cellular proliferation coupled to mitochondrial biogenesis. Causes impaired growth when overexpressed. In Saccharomyces cerevisiae (strain ATCC 204508 / S288c) (Baker's yeast), this protein is WW domain-containing protein WWM1 (WWM1).